Here is a 526-residue protein sequence, read N- to C-terminus: D-arabinono-1,4-lactone oxidase (526 aa).

The region spanning 22 to 196 is the FAD-binding PCMH-type domain; that stretch reads FWSRPSLYFQ…VYATLRTVPA (175 aa). A Pros-8alpha-FAD histidine modification is found at histidine 59.

This sequence belongs to the oxygen-dependent FAD-linked oxidoreductase family. Requires FAD as cofactor.

It localises to the mitochondrion membrane. It catalyses the reaction D-arabinono-1,4-lactone + O2 = dehydro-D-arabinono-1,4-lactone + H2O2 + H(+). It functions in the pathway cofactor biosynthesis; D-erythroascorbate biosynthesis; dehydro-D-arabinono-1,4-lactone from D-arabinose: step 2/2. This chain is D-arabinono-1,4-lactone oxidase (ALO1), found in Yarrowia lipolytica (strain CLIB 122 / E 150) (Yeast).